We begin with the raw amino-acid sequence, 202 residues long: Na(+)-translocating NADH-quinone reductase subunit E (202 aa).

The next 6 membrane-spanning stretches (helical) occupy residues alanine 11 to isoleucine 31, valine 35 to alanine 55, phenylalanine 81 to leucine 101, glycine 114 to valine 134, threonine 144 to isoleucine 164, and leucine 180 to valine 200.

The protein belongs to the NqrDE/RnfAE family. In terms of assembly, composed of six subunits; NqrA, NqrB, NqrC, NqrD, NqrE and NqrF.

Its subcellular location is the cell inner membrane. The enzyme catalyses a ubiquinone + n Na(+)(in) + NADH + H(+) = a ubiquinol + n Na(+)(out) + NAD(+). Functionally, NQR complex catalyzes the reduction of ubiquinone-1 to ubiquinol by two successive reactions, coupled with the transport of Na(+) ions from the cytoplasm to the periplasm. NqrA to NqrE are probably involved in the second step, the conversion of ubisemiquinone to ubiquinol. The protein is Na(+)-translocating NADH-quinone reductase subunit E of Pseudomonas aeruginosa (strain LESB58).